Consider the following 413-residue polypeptide: Arginine biosynthesis bifunctional protein ArgJ (413 aa).

T158, K184, T195, E285, N408, and S413 together coordinate substrate. T195 serves as the catalytic Nucleophile.

This sequence belongs to the ArgJ family. Heterotetramer of two alpha and two beta chains.

The protein resides in the cytoplasm. The enzyme catalyses N(2)-acetyl-L-ornithine + L-glutamate = N-acetyl-L-glutamate + L-ornithine. It catalyses the reaction L-glutamate + acetyl-CoA = N-acetyl-L-glutamate + CoA + H(+). It participates in amino-acid biosynthesis; L-arginine biosynthesis; L-ornithine and N-acetyl-L-glutamate from L-glutamate and N(2)-acetyl-L-ornithine (cyclic): step 1/1. Its pathway is amino-acid biosynthesis; L-arginine biosynthesis; N(2)-acetyl-L-ornithine from L-glutamate: step 1/4. Catalyzes two activities which are involved in the cyclic version of arginine biosynthesis: the synthesis of N-acetylglutamate from glutamate and acetyl-CoA as the acetyl donor, and of ornithine by transacetylation between N(2)-acetylornithine and glutamate. This chain is Arginine biosynthesis bifunctional protein ArgJ, found in Brucella melitensis biotype 1 (strain ATCC 23456 / CCUG 17765 / NCTC 10094 / 16M).